The primary structure comprises 398 residues: Signal-regulatory protein beta-1 (398 aa).

An N-terminal signal peptide occupies residues 1–29 (MPVPASWPHLPSPFLLMTLLLGRLTGVAG). In terms of domain architecture, Ig-like V-type spans 30–136 (EDELQVIQPE…SPDDVEFKSG (107 aa)). Residues 30 to 371 (EDELQVIQPE…EAALAPTAPL (342 aa)) are Extracellular-facing. 2 disulfide bridges follow: cysteine 54–cysteine 120 and cysteine 169–cysteine 227. Ig-like C1-type domains are found at residues 147–246 (PSAP…ANLS) and 253–347 (PTLE…YALE). 3 N-linked (GlcNAc...) asparagine glycosylation sites follow: asparagine 244, asparagine 269, and asparagine 291. A helical transmembrane segment spans residues 372 to 392 (LVALLLGPKLLLVVGVSAIYI). Residues 393 to 398 (CWKQKA) are Cytoplasmic-facing.

As to quaternary structure, homodimer; disulfide-linked. Interacts with TYROBP. This interaction results in the recruitment of SYK. In terms of processing, N-glycosylated. As to expression, detected in monocytes and dendritic cells.

It is found in the cell membrane. Immunoglobulin-like cell surface receptor involved in the negative regulation of receptor tyrosine kinase-coupled signaling processes. Also participates in the recruitment of tyrosine kinase SYK. Triggers activation of myeloid cells when associated with TYROBP. The protein is Signal-regulatory protein beta-1 (SIRPB1) of Homo sapiens (Human).